We begin with the raw amino-acid sequence, 177 residues long: CASP-like protein 4D1 (177 aa).

Over Met1–Arg20 the chain is Cytoplasmic. Residues Met21–Met41 traverse the membrane as a helical segment. Topologically, residues Thr42–Arg66 are extracellular. The helical transmembrane segment at Tyr67–Leu87 threads the bilayer. Residues Asn88–Asp107 are Cytoplasmic-facing. The helical transmembrane segment at Phe108 to Ala128 threads the bilayer. The Extracellular portion of the chain corresponds to Thr129–Ser153. A helical transmembrane segment spans residues Leu154–Pro174. Residues Lys175 to Val177 are Cytoplasmic-facing.

The protein belongs to the Casparian strip membrane proteins (CASP) family. Homodimer and heterodimers.

The protein resides in the cell membrane. The polypeptide is CASP-like protein 4D1 (Populus trichocarpa (Western balsam poplar)).